The chain runs to 244 residues: Phosphoadenosine 5'-phosphosulfate reductase (244 aa).

C239 functions as the Nucleophile; cysteine thiosulfonate intermediate in the catalytic mechanism.

This sequence belongs to the PAPS reductase family. CysH subfamily.

The protein localises to the cytoplasm. The enzyme catalyses [thioredoxin]-disulfide + sulfite + adenosine 3',5'-bisphosphate + 2 H(+) = [thioredoxin]-dithiol + 3'-phosphoadenylyl sulfate. It participates in sulfur metabolism; hydrogen sulfide biosynthesis; sulfite from sulfate: step 3/3. Catalyzes the formation of sulfite from phosphoadenosine 5'-phosphosulfate (PAPS) using thioredoxin as an electron donor. This is Phosphoadenosine 5'-phosphosulfate reductase from Serratia proteamaculans (strain 568).